The primary structure comprises 246 residues: Pyridoxine 5'-phosphate synthase (246 aa).

A 3-amino-2-oxopropyl phosphate-binding site is contributed by Asn12. Residue 14-15 (DH) coordinates 1-deoxy-D-xylulose 5-phosphate. Arg23 contributes to the 3-amino-2-oxopropyl phosphate binding site. His48 acts as the Proton acceptor in catalysis. Residues Arg50 and His55 each contribute to the 1-deoxy-D-xylulose 5-phosphate site. Residue Glu75 is the Proton acceptor of the active site. 1-deoxy-D-xylulose 5-phosphate is bound at residue Thr105. The active-site Proton donor is His196. 3-amino-2-oxopropyl phosphate contacts are provided by residues Gly197 and 218 to 219 (GH).

This sequence belongs to the PNP synthase family. Homooctamer; tetramer of dimers.

Its subcellular location is the cytoplasm. The catalysed reaction is 3-amino-2-oxopropyl phosphate + 1-deoxy-D-xylulose 5-phosphate = pyridoxine 5'-phosphate + phosphate + 2 H2O + H(+). It functions in the pathway cofactor biosynthesis; pyridoxine 5'-phosphate biosynthesis; pyridoxine 5'-phosphate from D-erythrose 4-phosphate: step 5/5. In terms of biological role, catalyzes the complicated ring closure reaction between the two acyclic compounds 1-deoxy-D-xylulose-5-phosphate (DXP) and 3-amino-2-oxopropyl phosphate (1-amino-acetone-3-phosphate or AAP) to form pyridoxine 5'-phosphate (PNP) and inorganic phosphate. The polypeptide is Pyridoxine 5'-phosphate synthase (Pseudomonas putida (strain W619)).